Reading from the N-terminus, the 763-residue chain is Glycerophosphodiester phosphodiesterase GDPDL1 (763 aa).

The first 35 residues, 1-35, serve as a signal peptide directing secretion; it reads MNSRPSNPTKLVIRSSTLLFCGVVLIHLFAAQIDA. At 36-744 the chain is on the extracellular side; sequence QRSTSRWQTL…STIAQAPSGQ (709 aa). A GP-PDE 1 domain is found at 50–350; the sequence is PLVIARGGFS…DFPITASAAV (301 aa). Asparagine 105, asparagine 192, asparagine 248, asparagine 257, asparagine 315, asparagine 359, asparagine 430, asparagine 534, asparagine 547, and asparagine 654 each carry an N-linked (GlcNAc...) asparagine glycan. The 303-residue stretch at 366–668 folds into the GP-PDE 2 domain; that stretch reads FLVISKDGAS…EFPFTAARYK (303 aa). A helical membrane pass occupies residues 745 to 762; the sequence is TRLKLSLLLSVFFLSLLL. Position 763 (leucine 763) is a topological domain, cytoplasmic.

The protein belongs to the glycerophosphoryl diester phosphodiesterase family. Ca(2+) serves as cofactor. As to expression, expressed in rosette and cauline leaves, stems, flowers and siliques.

It localises to the cell membrane. It catalyses the reaction a sn-glycero-3-phosphodiester + H2O = an alcohol + sn-glycerol 3-phosphate + H(+). Functionally, hydrolyzes glycerolphosphoglycerol, glycerophosphocholine and glycerophosphoethanolamine in vitro. This chain is Glycerophosphodiester phosphodiesterase GDPDL1, found in Arabidopsis thaliana (Mouse-ear cress).